A 462-amino-acid chain; its full sequence is Protein ultraspiracle homolog (462 aa).

The segment at 1 to 113 is modulating; sequence MSSVAKKDKR…NHPLSGSKHL (113 aa). 2 NR C4-type zinc fingers span residues 114 to 134 and 150 to 174; these read CSIC…CEGC and CRED…YQKC. A DNA-binding region (nuclear receptor) is located at residues 114 to 179; sequence CSICGDRASG…RYQKCLACGM (66 aa). Positions 180 to 201 are hinge; that stretch reads KREAVQEERQRAARRTEDAHPS. Residues 204–453 enclose the NR LBD domain; that stretch reads VQELSIERLL…SYIRDALCNH (250 aa).

This sequence belongs to the nuclear hormone receptor family. NR2 subfamily. In terms of assembly, heterodimer of USP and ECR. As to expression, abundant expression seen in males and ovaries.

It localises to the nucleus. In Bombyx mori (Silk moth), this protein is Protein ultraspiracle homolog (USP).